Here is a 229-residue protein sequence, read N- to C-terminus: Potassium/proton antiporter CemA (229 aa).

A run of 4 helical transmembrane segments spans residues 7–27 (LASL…SLSF), 106–126 (IILH…YFFL), 154–174 (ILLV…ELMI), and 189–209 (IISG…KYWI).

The protein belongs to the CemA family.

The protein localises to the plastid. It localises to the chloroplast inner membrane. The enzyme catalyses K(+)(in) + H(+)(out) = K(+)(out) + H(+)(in). Functionally, contributes to K(+)/H(+) antiport activity by supporting proton efflux to control proton extrusion and homeostasis in chloroplasts in a light-dependent manner to modulate photosynthesis. Prevents excessive induction of non-photochemical quenching (NPQ) under continuous-light conditions. Indirectly promotes efficient inorganic carbon uptake into chloroplasts. This is Potassium/proton antiporter CemA from Phalaenopsis aphrodite subsp. formosana (Moth orchid).